A 379-amino-acid chain; its full sequence is Cobalt-precorrin-5B C(1)-methyltransferase (379 aa).

This sequence belongs to the CbiD family.

It catalyses the reaction Co-precorrin-5B + S-adenosyl-L-methionine = Co-precorrin-6A + S-adenosyl-L-homocysteine. It functions in the pathway cofactor biosynthesis; adenosylcobalamin biosynthesis; cob(II)yrinate a,c-diamide from sirohydrochlorin (anaerobic route): step 6/10. In terms of biological role, catalyzes the methylation of C-1 in cobalt-precorrin-5B to form cobalt-precorrin-6A. This Citrobacter koseri (strain ATCC BAA-895 / CDC 4225-83 / SGSC4696) protein is Cobalt-precorrin-5B C(1)-methyltransferase.